The primary structure comprises 945 residues: Protein translocase subunit SecA (945 aa).

ATP-binding positions include Gln90, 108–112 (GEGKT), and Asp509. Positions 533-568 (VKPEDGHKPPVPLQRRSESSGFGEDKDVTTDNSKPL) are disordered. Over residues 547–561 (RRSESSGFGEDKDVT) the composition is skewed to basic and acidic residues.

The protein belongs to the SecA family. As to quaternary structure, monomer and homodimer. Part of the essential Sec protein translocation apparatus which comprises SecA, SecYEG and auxiliary proteins SecDF. Other proteins may also be involved.

It localises to the cell inner membrane. It is found in the cellular thylakoid membrane. The protein resides in the cytoplasm. It carries out the reaction ATP + H2O + cellular proteinSide 1 = ADP + phosphate + cellular proteinSide 2.. Part of the Sec protein translocase complex. Interacts with the SecYEG preprotein conducting channel. Has a central role in coupling the hydrolysis of ATP to the transfer of proteins into and across the cell membrane, serving as an ATP-driven molecular motor driving the stepwise translocation of polypeptide chains across the membrane. Functionally, probably participates in protein translocation into and across both the cytoplasmic and thylakoid membranes in cyanobacterial cells. This chain is Protein translocase subunit SecA, found in Prochlorococcus marinus (strain MIT 9211).